Consider the following 364-residue polypeptide: Probable dual-specificity RNA methyltransferase RlmN (364 aa).

Catalysis depends on Glu109, which acts as the Proton acceptor. Residues 123 to 351 (PKARLTVCVS…VSVRYSRGLE (229 aa)) enclose the Radical SAM core domain. Cys130 and Cys356 are joined by a disulfide. Residues Cys137, Cys141, and Cys144 each contribute to the [4Fe-4S] cluster site. S-adenosyl-L-methionine is bound by residues 184–185 (GE), Ser214, 237–239 (SLH), and Asn313. Cys356 functions as the S-methylcysteine intermediate in the catalytic mechanism.

Belongs to the radical SAM superfamily. RlmN family. [4Fe-4S] cluster is required as a cofactor.

It is found in the cytoplasm. It carries out the reaction adenosine(2503) in 23S rRNA + 2 reduced [2Fe-2S]-[ferredoxin] + 2 S-adenosyl-L-methionine = 2-methyladenosine(2503) in 23S rRNA + 5'-deoxyadenosine + L-methionine + 2 oxidized [2Fe-2S]-[ferredoxin] + S-adenosyl-L-homocysteine. It catalyses the reaction adenosine(37) in tRNA + 2 reduced [2Fe-2S]-[ferredoxin] + 2 S-adenosyl-L-methionine = 2-methyladenosine(37) in tRNA + 5'-deoxyadenosine + L-methionine + 2 oxidized [2Fe-2S]-[ferredoxin] + S-adenosyl-L-homocysteine. Functionally, specifically methylates position 2 of adenine 2503 in 23S rRNA and position 2 of adenine 37 in tRNAs. The protein is Probable dual-specificity RNA methyltransferase RlmN of Nostoc punctiforme (strain ATCC 29133 / PCC 73102).